The sequence spans 219 residues: Protein-L-isoaspartate O-methyltransferase (219 aa).

Residue serine 65 is part of the active site.

Belongs to the methyltransferase superfamily. L-isoaspartyl/D-aspartyl protein methyltransferase family. Monomer.

It localises to the cytoplasm. It carries out the reaction [protein]-L-isoaspartate + S-adenosyl-L-methionine = [protein]-L-isoaspartate alpha-methyl ester + S-adenosyl-L-homocysteine. In terms of biological role, catalyzes the methyl esterification of L-isoaspartyl residues in peptides and proteins that result from spontaneous decomposition of normal L-aspartyl and L-asparaginyl residues. It plays a role in the repair and/or degradation of damaged proteins. This Pyrococcus furiosus (strain ATCC 43587 / DSM 3638 / JCM 8422 / Vc1) protein is Protein-L-isoaspartate O-methyltransferase (pcm).